The sequence spans 225 residues: LysM and putative peptidoglycan-binding domain-containing protein 1 (225 aa).

Residues serine 23 and serine 33 each carry the phosphoserine modification. The region spanning leucine 40–isoleucine 84 is the LysM domain. The disordered stretch occupies residues leucine 97–serine 153. Residues aspartate 98 to glutamate 107 show a composition bias toward acidic residues. Serine 99 is modified (phosphoserine). Residues serine 112 to alanine 121 are compositionally biased toward basic and acidic residues. Phosphoserine is present on residues serine 164, serine 179, serine 192, and serine 210. The interval alanine 170 to leucine 225 is disordered. Over residues threonine 214–leucine 225 the composition is skewed to basic and acidic residues.

The sequence is that of LysM and putative peptidoglycan-binding domain-containing protein 1 (LYSMD1) from Bos taurus (Bovine).